The following is a 411-amino-acid chain: Arginine deiminase (411 aa).

Catalysis depends on C401, which acts as the Amidino-cysteine intermediate.

Belongs to the arginine deiminase family.

Its subcellular location is the cytoplasm. It carries out the reaction L-arginine + H2O = L-citrulline + NH4(+). The protein operates within amino-acid degradation; L-arginine degradation via ADI pathway; carbamoyl phosphate from L-arginine: step 1/2. This is Arginine deiminase from Staphylococcus epidermidis (strain ATCC 35984 / DSM 28319 / BCRC 17069 / CCUG 31568 / BM 3577 / RP62A).